The sequence spans 38 residues: Large ribosomal subunit protein bL36 (38 aa).

Belongs to the bacterial ribosomal protein bL36 family.

This is Large ribosomal subunit protein bL36 from Phytoplasma australiense.